A 254-amino-acid polypeptide reads, in one-letter code: Short-chain dehydrogenase srdF (254 aa).

Isoleucine 18, serine 37, glutamate 67, asparagine 95, tyrosine 167, lysine 171, valine 199, and threonine 201 together coordinate NADP(+). Tyrosine 167 (proton donor) is an active-site residue. Lysine 171 acts as the Lowers pKa of active site Tyr in catalysis.

Belongs to the short-chain dehydrogenases/reductases (SDR) family.

Its function is as follows. Short-chain dehydrogenase; part of the gene cluster that mediates the biosynthesis of sordarial, a salicylic aldehyde structurally related to the phytotoxin pyriculol. The most interesting aspect of this pathway is formation of an aromatic product from the highly reducing polyketide synthase srdA. SrdA synthesizes a reduced polyketide chain from one molecule of acetyl-CoA and five molecules of malonyl-CoA. The polyketide chain is then reductively released as an aldehyde. The oxidoreductases srdC, srdD and srdE then oxidize one of the hydroxy groups to facilitate the intramolecular aldol condensation, followed by dehydration to yield a salicylic aldehyde. This aldehyde can undergo facile reduction by endogenous reductases to yield the alcohol 1-hydroxy-2-hydroxymethyl-3-pent-1,3-dienylbenzene. The flavin-dependent srdI counteract against the propensity of the aldehydes to be reduced under physiological conditions and is responsible for reoxidizing 1-hydroxy-2-hydroxymethyl-3-pent-1,3-dienylbenzene back to the salicylic aldehyde. This salicylic aldehyde is then selectively epoxidized by the cupin-domain-containing oxidoreductase srdB to yield the epoxide, which can be hydrolyzed stereoselectively by the hydrolase srdG to give the final product sordarial. This Neurospora crassa (strain ATCC 24698 / 74-OR23-1A / CBS 708.71 / DSM 1257 / FGSC 987) protein is Short-chain dehydrogenase srdF.